Here is a 167-residue protein sequence, read N- to C-terminus: Mannose-specific lectin (167 aa).

An N-terminal signal peptide occupies residues 1-24 (MAFSISSTMIFLLSLALFSTLVSA). A Bulb-type lectin domain is found at 25–138 (DNHLLPGERL…PIFATGTNRF (114 aa)). An intrachain disulfide couples Cys53 to Cys76.

As to quaternary structure, homotetramer. As to expression, expressed in the pseudobulb, with highest levels of expression in the non-swollen internode (at protein level).

The protein resides in the secreted. Its function is as follows. Mannose-specific lectin. Shows agglutinating activity towards chicken erythrocytes. Has antifungal activity against A.alternata and Collectotrichum species. The protein is Mannose-specific lectin of Dendrobium findlayanum (Findlay's orchid).